We begin with the raw amino-acid sequence, 271 residues long: uncharacterized protein (271 aa).

3 Solcar repeats span residues Val3–Arg74, Glu81–Tyr163, and Asp171–Lys268. 6 helical membrane passes run Thr5 to Ile26, Gly49 to Val69, Ile84 to Leu104, Gly138 to Glu158, Trp170 to Ile190, and Phe240 to Val261.

This sequence belongs to the mitochondrial carrier (TC 2.A.29) family.

Its subcellular location is the mitochondrion inner membrane. This is an uncharacterized protein from Schizosaccharomyces pombe (strain 972 / ATCC 24843) (Fission yeast).